Reading from the N-terminus, the 177-residue chain is Large ribosomal subunit protein uL6 (177 aa).

Part of the 50S ribosomal subunit.

In terms of biological role, this protein binds to the 23S rRNA, and is important in its secondary structure. It is located near the subunit interface in the base of the L7/L12 stalk, and near the tRNA binding site of the peptidyltransferase center. The chain is Large ribosomal subunit protein uL6 from Rhodopseudomonas palustris (strain ATCC BAA-98 / CGA009).